A 470-amino-acid chain; its full sequence is Acetyl-CoA decarbonylase/synthase complex subunit beta 2 (470 aa).

Positions 190, 193, 279, and 281 each coordinate [Ni-Fe-S] cluster.

Belongs to the CdhC family. Monomer. The ACDS complex is made up of alpha, epsilon, beta, gamma and delta chains with a probable stoichiometry of (alpha(2)epsilon(2))(4)-beta(8)-(gamma(1)delta(1))(8) (Potential). The cofactor is [Ni-Fe-S] cluster.

The enzyme catalyses Co(I)-[corrinoid Fe-S protein] + acetyl-CoA + H(+) = methyl-Co(III)-[corrinoid Fe-S protein] + CO + CoA. The protein operates within one-carbon metabolism; methanogenesis from acetate. Its function is as follows. Part of a complex that catalyzes the reversible cleavage of acetyl-CoA, allowing growth on acetate as sole source of carbon and energy. The alpha-epsilon complex generates CO from CO(2), while the beta subunit (this protein) combines the CO with CoA and a methyl group to form acetyl-CoA. The methyl group, which is incorporated into acetyl-CoA, is transferred to the beta subunit by a corrinoid iron-sulfur protein (the gamma-delta complex). The chain is Acetyl-CoA decarbonylase/synthase complex subunit beta 2 (cdhC2) from Methanosarcina mazei (strain ATCC BAA-159 / DSM 3647 / Goe1 / Go1 / JCM 11833 / OCM 88) (Methanosarcina frisia).